Consider the following 362-residue polypeptide: Dihydroorotate dehydrogenase (quinone) (362 aa).

FMN is bound by residues 62 to 66 and threonine 86; that span reads AGYDK. Lysine 66 provides a ligand contact to substrate. 111–115 serves as a coordination point for substrate; the sequence is NRLGF. FMN contacts are provided by asparagine 139 and asparagine 170. Asparagine 170 is a binding site for substrate. Serine 173 acts as the Nucleophile in catalysis. Asparagine 175 is a substrate binding site. Positions 215 and 243 each coordinate FMN. 244–245 provides a ligand contact to substrate; it reads NT. Residues glycine 266, glycine 295, and 316 to 317 contribute to the FMN site; that span reads YS.

Belongs to the dihydroorotate dehydrogenase family. Type 2 subfamily. As to quaternary structure, monomer. FMN is required as a cofactor.

Its subcellular location is the cell membrane. It catalyses the reaction (S)-dihydroorotate + a quinone = orotate + a quinol. It participates in pyrimidine metabolism; UMP biosynthesis via de novo pathway; orotate from (S)-dihydroorotate (quinone route): step 1/1. Functionally, catalyzes the conversion of dihydroorotate to orotate with quinone as electron acceptor. This is Dihydroorotate dehydrogenase (quinone) from Sinorhizobium fredii (strain NBRC 101917 / NGR234).